The following is a 904-amino-acid chain: DNA polymerase I (904 aa).

Residues 186–279 (TPRQYPDFAA…DTLRLQPWDR (94 aa)) form the 5'-3' exonuclease domain. The region spanning 317 to 493 (RGGALAPGTV…LADALDAELA (177 aa)) is the 3'-5' exonuclease domain.

Belongs to the DNA polymerase type-A family. Single-chain monomer with multiple functions.

The enzyme catalyses DNA(n) + a 2'-deoxyribonucleoside 5'-triphosphate = DNA(n+1) + diphosphate. Functionally, in addition to polymerase activity, this DNA polymerase exhibits 3'-5' and 5'-3' exonuclease activity. This chain is DNA polymerase I (polA), found in Mycobacterium bovis (strain ATCC BAA-935 / AF2122/97).